A 223-amino-acid polypeptide reads, in one-letter code: Deoxyribose-phosphate aldolase (223 aa).

The active-site Proton donor/acceptor is Asp-89. Catalysis depends on Lys-152, which acts as the Schiff-base intermediate with acetaldehyde. Lys-181 acts as the Proton donor/acceptor in catalysis.

Belongs to the DeoC/FbaB aldolase family. DeoC type 1 subfamily.

Its subcellular location is the cytoplasm. The catalysed reaction is 2-deoxy-D-ribose 5-phosphate = D-glyceraldehyde 3-phosphate + acetaldehyde. Its pathway is carbohydrate degradation; 2-deoxy-D-ribose 1-phosphate degradation; D-glyceraldehyde 3-phosphate and acetaldehyde from 2-deoxy-alpha-D-ribose 1-phosphate: step 2/2. Its function is as follows. Catalyzes a reversible aldol reaction between acetaldehyde and D-glyceraldehyde 3-phosphate to generate 2-deoxy-D-ribose 5-phosphate. The polypeptide is Deoxyribose-phosphate aldolase (Bacillus cereus (strain ZK / E33L)).